The following is a 1217-amino-acid chain: WD repeat-containing protein on Y chromosome (1217 aa).

WD repeat units follow at residues 155 to 199 (EDMT…LRSA), 323 to 362 (RIPLGVSVFYVSEVKNILVTGGPDTFVRIWDVYISSEPSA), 366 to 405 (GHNGGIVAVFVQPEENKVYSVDYHKIIKVWDLQEHTLLQT), 456 to 495 (THAAPVSVVLYNRLFRNIVTCGLDSYIIVWDPWTGRRKII), 508 to 547 (TIDIEITAACFDPLEQFLLTGARDGSLKIWNYNNSVVVRN), 595 to 635 (FHTD…RRYN), 740 to 779 (KVGDCVLTMATDRKNRFLYTGTAFGYIKIWHIVNYCIPEA), and 823 to 862 (GHLKAINSIGFINLPKILFSGSHDYSCRLWTQSGRYLGTL). 2 disordered regions span residues 910-929 (QVKRPKPTEEREDEGEVEDT) and 1033-1217 (AGGQ…KDKP). Acidic residues predominate over residues 919 to 929 (EREDEGEVEDT). Composition is skewed to polar residues over residues 1041-1054 (RASSTWGKPKTNSI), 1085-1107 (FGPNPSRVRSNSPKVSFMPSQLK), and 1137-1179 (PVST…TSAN). Over residues 1181-1190 (KPDIMPVKIK) the composition is skewed to low complexity. A compositionally biased stretch (polar residues) spans 1198–1210 (RNTAPVQITTSIA).

This chain is WD repeat-containing protein on Y chromosome, found in Drosophila mojavensis (Fruit fly).